The following is a 396-amino-acid chain: Endo-1,4-beta-xylanase A (396 aa).

An N-terminal signal peptide occupies residues 1-28 (MITLFRKPFVAGLAISLLVGGGIGNVAA). A GH10 domain is found at 51-396 (AWQVASLSER…VKPAYWRIID (346 aa)). Catalysis depends on Glu-195, which acts as the Proton donor. Catalysis depends on Glu-301, which acts as the Nucleophile.

The protein belongs to the glycosyl hydrolase 10 (cellulase F) family.

Its subcellular location is the secreted. The catalysed reaction is Endohydrolysis of (1-&gt;4)-beta-D-xylosidic linkages in xylans.. It participates in glycan degradation; xylan degradation. The polypeptide is Endo-1,4-beta-xylanase A (xynA) (Halalkalibacterium halodurans (strain ATCC BAA-125 / DSM 18197 / FERM 7344 / JCM 9153 / C-125) (Bacillus halodurans)).